We begin with the raw amino-acid sequence, 1873 residues long: Kinesin-related protein 8 (1873 aa).

A Kinesin motor domain is found at 13–413; sequence CVRVALRVRP…LKYAYRARNI (401 aa). Position 93–100 (93–100) interacts with ATP; it reads GQTGSGKT. 9 disordered regions span residues 231–302, 463–567, 778–797, 841–891, 930–1008, 1179–1207, 1244–1267, 1328–1360, and 1403–1467; these read NSPV…DERN, VSIP…SPTS, LDKDKDKDKDNKDKDQYYED, KIDS…ARKT, KQRV…TEQL, PQPLQSQQQQQEKQQKQSNSEQVLEQRSS, LPSQQQLSSSQELAEEYTSPSTSS, TTTTTTTTNKQQVPKSFAPLNNTNNNNNNNNSS, and NNIT…PRPD. Over residues 232–247 the composition is skewed to low complexity; sequence SPVTSSSTSSTSTSSS. The span at 280–297 shows a compositional bias: acidic residues; sequence IDEDEEDDEEDEDDDIMS. A compositionally biased stretch (low complexity) spans 473–567; sequence TPTLTNNNNN…NNTATPSPTS (95 aa). A coiled-coil region spans residues 715 to 933; that stretch reads FENDSEELSD…KEIEVHKQRV (219 aa). Composition is skewed to low complexity over residues 937–1005, 1182–1200, 1244–1254, 1348–1358, and 1423–1454; these read INSK…TPTT, LQSQQQQQEKQQKQSNSEQ, LPSQQQLSSSQ, NNTNNNNNNNN, and SLQSSPLSLSLESGLATALANNGNNNNNSNNN. WD repeat units lie at residues 1506-1546, 1548-1587, 1589-1628, 1636-1673, and 1677-1714; these read GHDG…NMLD, SSPGPVRSLCINGSSGCMFSGGAERTVKVWDIRSPGNTNL, IFKTPSDVNCLVTYGNYVVSGLENGTFKVWDIRHMQKPLK, HHTGTIFSMSVTSKYLVTGSRDHTINLFHRDSFVLAQK, and PHHDGVTSIAVLDDVIYSGSRDRTIKRWDVSSINNLIN. The segment at 1758 to 1780 is disordered; that stretch reads NNNNNNSSNNNKSSSAPSSTTSS. WD repeat units lie at residues 1805–1842 and 1844–1873; these read AHNDWVNCLCIHNGMIFSGGKDSNIKGWDPLLSSNSLL and GHESSISCLTSSKEFLFSGSTDKCIKIWKC.

It belongs to the TRAFAC class myosin-kinesin ATPase superfamily. Kinesin family.

Its subcellular location is the cytoplasm. It localises to the cytoskeleton. Its function is as follows. Microtubule-associated force-producing protein that plays a role in organelle transport. Its motor activity is directed toward the microtubule's plus end. Cooperates with kif10 and dynein to organize interphase microtubules. The polypeptide is Kinesin-related protein 8 (kif8) (Dictyostelium discoideum (Social amoeba)).